A 415-amino-acid polypeptide reads, in one-letter code: Gamma-glutamyl phosphate reductase (415 aa).

Belongs to the gamma-glutamyl phosphate reductase family.

The protein localises to the cytoplasm. The catalysed reaction is L-glutamate 5-semialdehyde + phosphate + NADP(+) = L-glutamyl 5-phosphate + NADPH + H(+). The protein operates within amino-acid biosynthesis; L-proline biosynthesis; L-glutamate 5-semialdehyde from L-glutamate: step 2/2. Catalyzes the NADPH-dependent reduction of L-glutamate 5-phosphate into L-glutamate 5-semialdehyde and phosphate. The product spontaneously undergoes cyclization to form 1-pyrroline-5-carboxylate. This Clostridium perfringens (strain SM101 / Type A) protein is Gamma-glutamyl phosphate reductase.